The sequence spans 161 residues: Dihydrofolate reductase (161 aa).

The 160-residue stretch at Met-1–Arg-160 folds into the DHFR domain. Ile-7 to Ala-9 is a binding site for substrate. Residues Trp-8–Ala-9 and Ile-16–Asp-21 each bind NADP(+). The substrate site is built by Asp-29 and Arg-34. Gly-45 to Thr-48 contacts NADP(+). Arg-62 lines the substrate pocket. NADP(+) contacts are provided by residues Leu-67 to Gln-70, Gly-82, and Ile-96 to Val-101. Residues Tyr-102 and Thr-115 each coordinate substrate.

The protein belongs to the dihydrofolate reductase family.

It carries out the reaction (6S)-5,6,7,8-tetrahydrofolate + NADP(+) = 7,8-dihydrofolate + NADPH + H(+). Its pathway is cofactor biosynthesis; tetrahydrofolate biosynthesis; 5,6,7,8-tetrahydrofolate from 7,8-dihydrofolate: step 1/1. Its function is as follows. Key enzyme in folate metabolism. Catalyzes an essential reaction for de novo glycine and purine synthesis, and for DNA precursor synthesis. The sequence is that of Dihydrofolate reductase (folA) from Mycobacterium tuberculosis (strain CDC 1551 / Oshkosh).